The chain runs to 163 residues: Nucleotide-binding protein Dde_2479 (163 aa).

Belongs to the YajQ family.

In terms of biological role, nucleotide-binding protein. The sequence is that of Nucleotide-binding protein Dde_2479 from Oleidesulfovibrio alaskensis (strain ATCC BAA-1058 / DSM 17464 / G20) (Desulfovibrio alaskensis).